A 547-amino-acid chain; its full sequence is Chaperonin GroEL (547 aa).

ATP-binding positions include 30-33, Lys-51, 87-91, Gly-415, and Asp-496; these read TLGP and DGTTT.

This sequence belongs to the chaperonin (HSP60) family. In terms of assembly, forms a cylinder of 14 subunits composed of two heptameric rings stacked back-to-back. Interacts with the co-chaperonin GroES.

The protein resides in the cytoplasm. It carries out the reaction ATP + H2O + a folded polypeptide = ADP + phosphate + an unfolded polypeptide.. In terms of biological role, together with its co-chaperonin GroES, plays an essential role in assisting protein folding. The GroEL-GroES system forms a nano-cage that allows encapsulation of the non-native substrate proteins and provides a physical environment optimized to promote and accelerate protein folding. The chain is Chaperonin GroEL from Actinobacillus pleuropneumoniae (Haemophilus pleuropneumoniae).